Reading from the N-terminus, the 320-residue chain is Aspartate carbamoyltransferase catalytic subunit (320 aa).

Carbamoyl phosphate-binding residues include Arg-68 and Thr-69. Lys-96 contributes to the L-aspartate binding site. Carbamoyl phosphate-binding residues include Arg-118, His-148, and Gln-151. Residues Arg-181 and Arg-236 each contribute to the L-aspartate site. Carbamoyl phosphate-binding residues include Gly-277 and Pro-278.

It belongs to the aspartate/ornithine carbamoyltransferase superfamily. ATCase family. As to quaternary structure, heterododecamer (2C3:3R2) of six catalytic PyrB chains organized as two trimers (C3), and six regulatory PyrI chains organized as three dimers (R2).

It carries out the reaction carbamoyl phosphate + L-aspartate = N-carbamoyl-L-aspartate + phosphate + H(+). Its pathway is pyrimidine metabolism; UMP biosynthesis via de novo pathway; (S)-dihydroorotate from bicarbonate: step 2/3. Functionally, catalyzes the condensation of carbamoyl phosphate and aspartate to form carbamoyl aspartate and inorganic phosphate, the committed step in the de novo pyrimidine nucleotide biosynthesis pathway. The chain is Aspartate carbamoyltransferase catalytic subunit from Acidovorax ebreus (strain TPSY) (Diaphorobacter sp. (strain TPSY)).